The sequence spans 226 residues: MSKSRKESKSLEEYSIVSSTSRPKKKKWGLVATGVIGGTLVALYAVATPFVAPALRKLCLPYVPATTTQVKNVLKMLRSRTGIVVDIGSGDGRIVIAAAKEGFQAVGYELNPWLVWYSRFRAWREGVHHHTRFYVSDLWKVSFSRYRNVVIFGVPQMMPQLEKKLQTELQDAARVIACRFPFPNWVPDHIFGEGVDTVWTYDLGAFRKVSDLKQVASKHCILDTTV.

A helical transmembrane segment spans residues 35–55; sequence VIGGTLVALYAVATPFVAPAL. Residues 48–82 are required for mitochondrial location; that stretch reads TPFVAPALRKLCLPYVPATTTQVKNVLKMLRSRTG.

It belongs to the ANT/ATPSC lysine N-methyltransferase family.

The protein localises to the mitochondrion membrane. Functionally, mitochondrial protein-lysine N-methyltransferase that promotes chronic pain. Involved in persistent inflammatory and neuropathic pain: methyltransferase activity in the mitochondria of sensory neurons promotes chronic pain via a pathway that depends on the production of reactive oxygen species (ROS) and on the engagement of spinal cord microglia. Protein-lysine N-methyltransferase activity is dependent on S-adenosyl-L-methionine. In Xenopus laevis (African clawed frog), this protein is ATP synthase subunit C lysine N-methyltransferase (atpsckmt).